Reading from the N-terminus, the 131-residue chain is Pancreatic polypeptide prohormone (131 aa).

An N-terminal signal peptide occupies residues 1–29 (MAAAHRCLFLLLLSTCVALLLQPPLGALG). Tyrosine 65 is subject to Tyrosine amide.

The protein belongs to the NPY family.

Its subcellular location is the secreted. In terms of biological role, hormone secreted by pancreatic cells that acts as a regulator of pancreatic and gastrointestinal functions probably by signaling through the G protein-coupled receptor NPY4R2. The chain is Pancreatic polypeptide prohormone (PPY) from Bos taurus (Bovine).